A 253-amino-acid polypeptide reads, in one-letter code: Trans-aconitate 2-methyltransferase (253 aa).

This sequence belongs to the methyltransferase superfamily. Tam family.

The protein localises to the cytoplasm. The enzyme catalyses trans-aconitate + S-adenosyl-L-methionine = (E)-3-(methoxycarbonyl)pent-2-enedioate + S-adenosyl-L-homocysteine. Catalyzes the S-adenosylmethionine monomethyl esterification of trans-aconitate. The polypeptide is Trans-aconitate 2-methyltransferase (Azoarcus sp. (strain BH72)).